Reading from the N-terminus, the 426-residue chain is Trigger factor (426 aa).

The 75-residue stretch at 165 to 239 folds into the PPIase FKBP-type domain; the sequence is GDVYKLNEAG…ISEIKRLELP (75 aa).

The protein belongs to the FKBP-type PPIase family. Tig subfamily.

It is found in the cytoplasm. The enzyme catalyses [protein]-peptidylproline (omega=180) = [protein]-peptidylproline (omega=0). Functionally, involved in protein export. Acts as a chaperone by maintaining the newly synthesized protein in an open conformation. Functions as a peptidyl-prolyl cis-trans isomerase. This is Trigger factor from Pelodictyon phaeoclathratiforme (strain DSM 5477 / BU-1).